Consider the following 551-residue polypeptide: HTH-type transcriptional regulator SgrR (551 aa).

An HTH marR-type domain is found at 1 to 116 (MPSARLQQQF…LVSHLGRSFR (116 aa)). Residues 26–49 (LNELAALLSCSRRHMRTLLNTMQD) constitute a DNA-binding region (H-T-H motif). Residues 163-492 (ELEADIAHHW…IDWQADAARW (330 aa)) are solute-binding.

Activates the small RNA gene sgrS under glucose-phosphate stress conditions as well as yfdZ. Represses its own transcription under both stress and non-stress conditions. Might act as a sensor of the intracellular accumulation of phosphoglucose by binding these molecules in its C-terminal solute-binding domain. The protein is HTH-type transcriptional regulator SgrR of Escherichia coli O1:K1 / APEC.